The primary structure comprises 512 residues: Ferrochelatase-2, chloroplastic (512 aa).

Residues 1–32 (MNCPAMTASPSSSSSSSYSTFRPPPPLLPQLS) are disordered. A chloroplast-targeting transit peptide spans 1 to 83 (MNCPAMTASP…SNPLNISSSS (83 aa)). The segment covering 9-21 (SPSSSSSSSYSTF) has biased composition (low complexity). Val-84 is subject to N-acetylvaline.

It belongs to the ferrochelatase family. Expressed in leaves and flowers.

It localises to the plastid. Its subcellular location is the chloroplast membrane. It is found in the chloroplast thylakoid membrane. The catalysed reaction is heme b + 2 H(+) = protoporphyrin IX + Fe(2+). It participates in porphyrin-containing compound metabolism; protoheme biosynthesis; protoheme from protoporphyrin-IX: step 1/1. Catalyzes the last step of heme biosynthesis by inserting ferrous iron into protoporphyrin IX to produce protoheme. Produces heme for photosynthetic cytochromes, and for proteins involved in abiotic and biotic stress responses. May play a role in the quality control of individual chloroplasts during photo-oxidative stress through regulation of heme biosynthesis. This chain is Ferrochelatase-2, chloroplastic, found in Arabidopsis thaliana (Mouse-ear cress).